The primary structure comprises 203 residues: Small ribosomal subunit protein uS4c (203 aa).

The 64-residue stretch at 91 to 154 folds into the S4 RNA-binding domain; it reads MRLDNIIFRL…KYESIISKNI (64 aa).

This sequence belongs to the universal ribosomal protein uS4 family. Part of the 30S ribosomal subunit. Contacts protein S5. The interaction surface between S4 and S5 is involved in control of translational fidelity.

The protein resides in the plastid. Its subcellular location is the chloroplast. Functionally, one of the primary rRNA binding proteins, it binds directly to 16S rRNA where it nucleates assembly of the body of the 30S subunit. In terms of biological role, with S5 and S12 plays an important role in translational accuracy. In Lopidium struthiopteris (Moss), this protein is Small ribosomal subunit protein uS4c (rps4).